The sequence spans 328 residues: tRNA uridine(34) hydroxylase (328 aa).

Residues 123–217 (SDPETVLIDT…YLEEVPKEKS (95 aa)) form the Rhodanese domain. The active-site Cysteine persulfide intermediate is Cys-177. The segment at 304-328 (AKKLAQLNKQKKQQAKEAARKKAQQ) is disordered. Residues 317–328 (QAKEAARKKAQQ) are compositionally biased toward basic and acidic residues.

The protein belongs to the TrhO family.

The catalysed reaction is uridine(34) in tRNA + AH2 + O2 = 5-hydroxyuridine(34) in tRNA + A + H2O. Its function is as follows. Catalyzes oxygen-dependent 5-hydroxyuridine (ho5U) modification at position 34 in tRNAs. This Francisella tularensis subsp. holarctica (strain LVS) protein is tRNA uridine(34) hydroxylase.